The following is a 302-amino-acid chain: Tegument protein VP22 (302 aa).

The segment covering 1-10 (MASSDGDRLC) has biased composition (basic and acidic residues). 2 disordered regions span residues 1 to 42 (MASS…PDDS) and 125 to 170 (SFTK…SSWC). The tract at residues 154 to 244 (RPISFSTAPK…ANEADLGEGA (91 aa)) is interaction with gE. Over residues 157–170 (SFSTAPKTATSSWC) the composition is skewed to polar residues. Positions 212–224 (LDRLLTGAVIRIT) match the Nuclear export signal motif. The segment at 243-302 (GASVSKRGHNRKTGDLQGGMGNEPMYAQVRKPKSRTDTQTTGRITNRSRARSASRTDTRK) is disordered.

The protein belongs to the alphaherpesvirinae VP22 tegument protein family. Interacts with gE (via C-terminus); this interaction is necessary for the recruitment of VP22/ORF9 to the Golgi and its packaging into virions. Interacts with gM (via C-terminus). Interacts with VP16/ORF10; this interaction allows the formation of a tripartite complex composed of VP16/ORF10, VP22/ORF9 and VHS/ORF17. Interacts with the capsid-binding protein ORF44. Interacts with host CGAS. Highly phosphorylated in the host cell. Packaging is selective for underphosphorylated forms.

The protein localises to the virion tegument. Its subcellular location is the host cytoplasm. It is found in the host nucleus. The protein resides in the host Golgi apparatus. Tegument protein that plays different roles during the time course of infection. Participates in both the accumulation of viral mRNAs and viral protein translation at late time of infection. Modulates the RNase activity of the virion host shutoff protein ORF17 probably to ensure necessary levels of key cellular mRNAs and proteins. Plays a role in microtubule reorganization that occurs after viral infection by stabilizing microtubule network. Plays a role in the inhibition of host innate immune system by targeting the CGAS enzymatic activity which is the principal cytosolic DNA sensor that detects invading viral DNA. Acts by mediating disruption of liquid-like droplets in which CGAS is activated, thereby preventing CGAS activity. The protein is Tegument protein VP22 of Homo sapiens (Human).